The chain runs to 255 residues: Imidazole glycerol phosphate synthase subunit HisF (255 aa).

Catalysis depends on residues Asp12 and Asp131.

It belongs to the HisA/HisF family. In terms of assembly, heterodimer of HisH and HisF.

Its subcellular location is the cytoplasm. It carries out the reaction 5-[(5-phospho-1-deoxy-D-ribulos-1-ylimino)methylamino]-1-(5-phospho-beta-D-ribosyl)imidazole-4-carboxamide + L-glutamine = D-erythro-1-(imidazol-4-yl)glycerol 3-phosphate + 5-amino-1-(5-phospho-beta-D-ribosyl)imidazole-4-carboxamide + L-glutamate + H(+). Its pathway is amino-acid biosynthesis; L-histidine biosynthesis; L-histidine from 5-phospho-alpha-D-ribose 1-diphosphate: step 5/9. Functionally, IGPS catalyzes the conversion of PRFAR and glutamine to IGP, AICAR and glutamate. The HisF subunit catalyzes the cyclization activity that produces IGP and AICAR from PRFAR using the ammonia provided by the HisH subunit. The protein is Imidazole glycerol phosphate synthase subunit HisF of Neisseria meningitidis serogroup C / serotype 2a (strain ATCC 700532 / DSM 15464 / FAM18).